We begin with the raw amino-acid sequence, 59 residues long: Conotoxin reg3.15 (59 aa).

Residues 1-15 (RVLLTICLLLFPLTA) form the signal peptide. Positions 16–44 (IPLGGDQPAERMRNVRSAVQDPRFDSVGW) are excised as a propeptide. Intrachain disulfides connect C45–C59, C46–C55, and C51–C58.

The protein belongs to the conotoxin M superfamily. As to expression, expressed by the venom duct.

The protein resides in the secreted. The protein is Conotoxin reg3.15 of Conus regius (Crown cone).